We begin with the raw amino-acid sequence, 144 residues long: Large ribosomal subunit protein uL15 (144 aa).

The tract at residues 1–59 is disordered; that stretch reads MRLNTISPAEGSKPTGKRSGRGIGSGLGKTGGVGHKGQKSRSGGRVKPGFEGGQMPIQR. The segment covering 21–35 has biased composition (gly residues); sequence RGIGSGLGKTGGVGH.

This sequence belongs to the universal ribosomal protein uL15 family. In terms of assembly, part of the 50S ribosomal subunit.

Its function is as follows. Binds to the 23S rRNA. This chain is Large ribosomal subunit protein uL15, found in Alteromonas mediterranea (strain DSM 17117 / CIP 110805 / LMG 28347 / Deep ecotype).